The sequence spans 264 residues: 3-methyl-2-oxobutanoate hydroxymethyltransferase (264 aa).

Asp45 and Asp84 together coordinate Mg(2+). 3-methyl-2-oxobutanoate-binding positions include 45 to 46 (DS), Asp84, and Lys112. Glu114 contributes to the Mg(2+) binding site. The active-site Proton acceptor is the Glu181.

It belongs to the PanB family. As to quaternary structure, homodecamer; pentamer of dimers. Requires Mg(2+) as cofactor.

Its subcellular location is the cytoplasm. The catalysed reaction is 3-methyl-2-oxobutanoate + (6R)-5,10-methylene-5,6,7,8-tetrahydrofolate + H2O = 2-dehydropantoate + (6S)-5,6,7,8-tetrahydrofolate. It participates in cofactor biosynthesis; (R)-pantothenate biosynthesis; (R)-pantoate from 3-methyl-2-oxobutanoate: step 1/2. Catalyzes the reversible reaction in which hydroxymethyl group from 5,10-methylenetetrahydrofolate is transferred onto alpha-ketoisovalerate to form ketopantoate. The polypeptide is 3-methyl-2-oxobutanoate hydroxymethyltransferase (Shewanella pealeana (strain ATCC 700345 / ANG-SQ1)).